The sequence spans 131 residues: Serum amyloid A-3 protein (131 aa).

The N-terminal stretch at 1-18 is a signal peptide; that stretch reads MNLSTGIIFCFLILGVSS. The segment covering 94–105 has biased composition (basic and acidic residues); it reads MTRDQVREDSKA. The segment at 94–131 is disordered; the sequence is MTRDQVREDSKADQFANEWGRSGKDPNHFRPAGLPDKY.

This sequence belongs to the SAA family. Expressed in the liver. Expressed in mammary epithelial cells. Expressed at high levels in mammary ductal cells and vesicle engorged alveoli, but absent from stromal and connective tissue and leukocytes. Secreted into colostrum and mastitic milk (at protein level). Low expression levels, if any, in normal milk (at protein level).

It is found in the secreted. Major acute phase reactant. Apolipoprotein of the HDL complex. May have a role in protection of the mammary gland during remodeling and infection. In vitro exhibits antimicrobial activity against Escherichia coli, Streptococcus uberis and Pseudomonas aeruginosa. The polypeptide is Serum amyloid A-3 protein (SAA3) (Bos taurus (Bovine)).